Reading from the N-terminus, the 216-residue chain is uncharacterized protein (216 aa).

A helical transmembrane segment spans residues 5–25; sequence YVKALVAVTVALGVLLPSTIS. Low complexity-rich tracts occupy residues 28-67 and 89-108; these read KSFS…SSSS and KASS…ATSK. The interval 28 to 115 is disordered; the sequence is KSFSGRSSSS…TSKVTGKTYS (88 aa). 2 helical membrane passes run 137-157 and 183-203; these read GFAP…MFMI and IAWI…IALI.

The protein localises to the cell membrane. This is an uncharacterized protein from Bacillus subtilis (strain 168).